We begin with the raw amino-acid sequence, 112 residues long: UPF0342 protein STH1710 (112 aa).

This sequence belongs to the UPF0342 family.

In Symbiobacterium thermophilum (strain DSM 24528 / JCM 14929 / IAM 14863 / T), this protein is UPF0342 protein STH1710.